Here is a 99-residue protein sequence, read N- to C-terminus: Cystatin (99 aa).

In terms of domain architecture, Cystatin spans 3-99 (GGLSPRSVSD…EEKLCGFQVW (97 aa)). A Secondary area of contact motif is present at residues 47–51 (QSVAG). C65 and C81 are disulfide-bonded.

It belongs to the cystatin family. In terms of tissue distribution, expressed by the venom gland.

The protein resides in the secreted. Its function is as follows. Inhibits various C1 cysteine proteases including cathepsin L (Ki is 0.1 nM), papain (Ki is 0.19 nM), cathepsin S (Ki is 1.2 nM), and cathepsin B (Ki is 2.5 nM). This protein has no toxic activity and its function in the venom is unknown. It may play a role as housekeeping or regulatory protein. This Naja atra (Chinese cobra) protein is Cystatin.